A 397-amino-acid polypeptide reads, in one-letter code: MAMIELEFGRQNFHPLKKKSPLLLKLIAVVFAVLLFCEFLIYYLAIFQCNWPEVKTTASDGEQATREPVLKAMFLADTHLLGEVLGHWPDKLRREWQMERAFQTALWLLQPEVVFILGDIFDEGKWSTPEAWVNDVERFQKMFRHPSHVQLKVVAGNHDIGFHYEMNTYKVERFEKVFSSERLFSWKGINFVMVNSVALNGDGCGICSETEAELIEVSHRLNCSREQARGSSRCGPGPLLPMSAPVLLQHYPLYRRSDANCSGEDAAPPEERDIPFKENYDVLSREASQKLLRWFQPRLVLSGHTHSACEVHHGGRVPELSVPSFSWRNRNNPSFIMGSITPTDYTLSKCYLPREDVVLIIYCGMVGFLVVLTLTHFGLLASPFLAGLNLLRKRKTR.

Residues 27–47 traverse the membrane as a helical segment; the sequence is IAVVFAVLLFCEFLIYYLAIF. The a divalent metal cation site is built by Asp-77, Asp-119, Asn-157, His-250, His-304, and His-306. Residues 357-377 traverse the membrane as a helical segment; the sequence is VVLIIYCGMVGFLVVLTLTHF. The short motif at 393-397 is the Di-lysine motif element; sequence KRKTR.

The protein belongs to the metallophosphoesterase superfamily. MPPE1 family. In terms of assembly, interacts with GPI-anchor proteins (via the GPI portion). Interacts with TMED10. The cofactor is Mn(2+).

The protein localises to the endoplasmic reticulum-Golgi intermediate compartment membrane. Its function is as follows. Metallophosphoesterase that catalyzes the removal of a side-chain ethanolamine-phosphate (EtNP) from the second mannose of the GPI-anchor protein intermediate. Participates in the glycan remodeling steps of GPI-anchor maturation to allow an efficient transport of GPI-anchor proteins from the endoplasmic reticulum to the Golgi. In Pongo abelii (Sumatran orangutan), this protein is Metallophosphoesterase 1.